The following is a 54-amino-acid chain: UPF0391 membrane protein RC1_1636 (54 aa).

Helical transmembrane passes span 3–23 (YWAL…FGGI) and 30–50 (IAQI…IMGL).

Belongs to the UPF0391 family.

The protein resides in the cell membrane. In Rhodospirillum centenum (strain ATCC 51521 / SW), this protein is UPF0391 membrane protein RC1_1636.